Consider the following 418-residue polypeptide: Gamma-glutamyl phosphate reductase (418 aa).

This sequence belongs to the gamma-glutamyl phosphate reductase family.

It is found in the cytoplasm. The enzyme catalyses L-glutamate 5-semialdehyde + phosphate + NADP(+) = L-glutamyl 5-phosphate + NADPH + H(+). The protein operates within amino-acid biosynthesis; L-proline biosynthesis; L-glutamate 5-semialdehyde from L-glutamate: step 2/2. Catalyzes the NADPH-dependent reduction of L-glutamate 5-phosphate into L-glutamate 5-semialdehyde and phosphate. The product spontaneously undergoes cyclization to form 1-pyrroline-5-carboxylate. This chain is Gamma-glutamyl phosphate reductase, found in Agathobacter rectalis (strain ATCC 33656 / DSM 3377 / JCM 17463 / KCTC 5835 / VPI 0990) (Eubacterium rectale).